We begin with the raw amino-acid sequence, 263 residues long: Cobalt-precorrin-6A reductase (263 aa).

Belongs to the precorrin-6x reductase family.

The enzyme catalyses Co-precorrin-6B + NAD(+) = Co-precorrin-6A + NADH + H(+). The protein operates within cofactor biosynthesis; adenosylcobalamin biosynthesis; cob(II)yrinate a,c-diamide from sirohydrochlorin (anaerobic route): step 7/10. Its function is as follows. Catalyzes the reduction of the macrocycle of cobalt-precorrin-6A to cobalt-precorrin-6B. In Salmonella typhimurium (strain LT2 / SGSC1412 / ATCC 700720), this protein is Cobalt-precorrin-6A reductase (cbiJ).